Reading from the N-terminus, the 384-residue chain is Secreted effector protein EspF(U) (384 aa).

Tandem repeats lie at residues 96–142, 143–189, 190–236, 237–283, 284–330, and 331–377. The interval 96-377 is 6 X 48 AA approximate tandem repeats; the sequence is IXPARSMAEH…RLMQHLAEHG (282 aa). Residues 247-266 are disordered; sequence IPPAPNWPAPPPPVQNEQSR. Over residues 248–260 the composition is skewed to pro residues; the sequence is PPAPNWPAPPPPV.

This sequence belongs to the EspF(U)/TccP family. In terms of assembly, interacts with host BAIAP2 and host WASL/N-WASP. Can also interact with host proteins BAIAP2L1 and WAS/WASP.

Its subcellular location is the secreted. The protein localises to the host cytoplasm. Required for efficient pedestal formation in host epithelial cells during infection. Acts as an intermediate between Tir (via host BAIAP2) and host WASL/N-WASP. Directly binds and activates WASL/N-WASP, which stimulates actin polymerization and leads to the formation of actin pedestals at the sites of bacterial adhesion. In Escherichia coli O157:H7, this protein is Secreted effector protein EspF(U) (espF(U)).